The chain runs to 308 residues: Ornithine carbamoyltransferase (308 aa).

Carbamoyl phosphate contacts are provided by residues 56–59 (STRT), Gln-83, Arg-107, and 134–137 (HPCQ). L-ornithine contacts are provided by residues Asn-165, Asp-225, and 229 to 230 (SM). Residues 266 to 267 (CL) and Arg-294 contribute to the carbamoyl phosphate site.

Belongs to the aspartate/ornithine carbamoyltransferase superfamily. OTCase family.

Its subcellular location is the cytoplasm. The enzyme catalyses carbamoyl phosphate + L-ornithine = L-citrulline + phosphate + H(+). It functions in the pathway amino-acid biosynthesis; L-arginine biosynthesis; L-arginine from L-ornithine and carbamoyl phosphate: step 1/3. Its function is as follows. Reversibly catalyzes the transfer of the carbamoyl group from carbamoyl phosphate (CP) to the N(epsilon) atom of ornithine (ORN) to produce L-citrulline. In Cereibacter sphaeroides (strain ATCC 17029 / ATH 2.4.9) (Rhodobacter sphaeroides), this protein is Ornithine carbamoyltransferase.